Reading from the N-terminus, the 558-residue chain is Glucose-6-phosphate isomerase (558 aa).

Glu-362 acts as the Proton donor in catalysis. Residues His-393 and Lys-523 contribute to the active site.

It belongs to the GPI family.

It is found in the cytoplasm. The catalysed reaction is alpha-D-glucose 6-phosphate = beta-D-fructose 6-phosphate. It participates in carbohydrate degradation; glycolysis; D-glyceraldehyde 3-phosphate and glycerone phosphate from D-glucose: step 2/4. The protein is Glucose-6-phosphate isomerase (Pgi) of Drosophila simulans (Fruit fly).